A 341-amino-acid polypeptide reads, in one-letter code: UDP-3-O-acylglucosamine N-acyltransferase (341 aa).

The active-site Proton acceptor is the histidine 241.

Belongs to the transferase hexapeptide repeat family. LpxD subfamily. In terms of assembly, homotrimer.

It carries out the reaction a UDP-3-O-[(3R)-3-hydroxyacyl]-alpha-D-glucosamine + a (3R)-hydroxyacyl-[ACP] = a UDP-2-N,3-O-bis[(3R)-3-hydroxyacyl]-alpha-D-glucosamine + holo-[ACP] + H(+). The protein operates within bacterial outer membrane biogenesis; LPS lipid A biosynthesis. Catalyzes the N-acylation of UDP-3-O-acylglucosamine using 3-hydroxyacyl-ACP as the acyl donor. Is involved in the biosynthesis of lipid A, a phosphorylated glycolipid that anchors the lipopolysaccharide to the outer membrane of the cell. This chain is UDP-3-O-acylglucosamine N-acyltransferase, found in Histophilus somni (strain 129Pt) (Haemophilus somnus).